The following is a 441-amino-acid chain: 4-hydroxy-3-methylbut-2-en-1-yl diphosphate synthase (flavodoxin) (441 aa).

The [4Fe-4S] cluster site is built by Cys320, Cys323, Cys366, and Glu373.

It belongs to the IspG family. Requires [4Fe-4S] cluster as cofactor.

The enzyme catalyses (2E)-4-hydroxy-3-methylbut-2-enyl diphosphate + oxidized [flavodoxin] + H2O + 2 H(+) = 2-C-methyl-D-erythritol 2,4-cyclic diphosphate + reduced [flavodoxin]. It participates in isoprenoid biosynthesis; isopentenyl diphosphate biosynthesis via DXP pathway; isopentenyl diphosphate from 1-deoxy-D-xylulose 5-phosphate: step 5/6. Its function is as follows. Converts 2C-methyl-D-erythritol 2,4-cyclodiphosphate (ME-2,4cPP) into 1-hydroxy-2-methyl-2-(E)-butenyl 4-diphosphate. The polypeptide is 4-hydroxy-3-methylbut-2-en-1-yl diphosphate synthase (flavodoxin) (Rhodopseudomonas palustris (strain ATCC BAA-98 / CGA009)).